Consider the following 172-residue polypeptide: uncharacterized protein (172 aa).

Residues 130–154 (EQEKGAAPQEGKDWQVISEEDKKNQ) form a disordered region.

This is an uncharacterized protein from Bacillus subtilis (strain 168).